A 253-amino-acid chain; its full sequence is Triosephosphate isomerase, cytosolic (253 aa).

Substrate-binding residues include Asn-10 and Lys-12. His-96 serves as the catalytic Electrophile. The active-site Proton acceptor is Glu-166.

This sequence belongs to the triosephosphate isomerase family. In terms of assembly, homodimer.

The protein localises to the cytoplasm. The enzyme catalyses D-glyceraldehyde 3-phosphate = dihydroxyacetone phosphate. The protein operates within carbohydrate biosynthesis; gluconeogenesis. It functions in the pathway carbohydrate degradation; glycolysis; D-glyceraldehyde 3-phosphate from glycerone phosphate: step 1/1. This is Triosephosphate isomerase, cytosolic from Coptis japonica (Japanese goldthread).